The sequence spans 295 residues: Bifunctional protein FolD (295 aa).

Residues 163 to 165, serine 188, and isoleucine 229 contribute to the NADP(+) site; that span reads GRS.

This sequence belongs to the tetrahydrofolate dehydrogenase/cyclohydrolase family. Homodimer.

The enzyme catalyses (6R)-5,10-methylene-5,6,7,8-tetrahydrofolate + NADP(+) = (6R)-5,10-methenyltetrahydrofolate + NADPH. The catalysed reaction is (6R)-5,10-methenyltetrahydrofolate + H2O = (6R)-10-formyltetrahydrofolate + H(+). It participates in one-carbon metabolism; tetrahydrofolate interconversion. Its function is as follows. Catalyzes the oxidation of 5,10-methylenetetrahydrofolate to 5,10-methenyltetrahydrofolate and then the hydrolysis of 5,10-methenyltetrahydrofolate to 10-formyltetrahydrofolate. This Hyphomonas neptunium (strain ATCC 15444) protein is Bifunctional protein FolD.